The sequence spans 209 residues: LexA repressor (209 aa).

A DNA-binding region (H-T-H motif) is located at residues arginine 28–lysine 48. Active-site for autocatalytic cleavage activity residues include serine 126 and lysine 163.

Belongs to the peptidase S24 family. In terms of assembly, homodimer.

It carries out the reaction Hydrolysis of Ala-|-Gly bond in repressor LexA.. In terms of biological role, represses a number of genes involved in the response to DNA damage (SOS response), including recA and lexA. In the presence of single-stranded DNA, RecA interacts with LexA causing an autocatalytic cleavage which disrupts the DNA-binding part of LexA, leading to derepression of the SOS regulon and eventually DNA repair. The polypeptide is LexA repressor (Psychromonas ingrahamii (strain DSM 17664 / CCUG 51855 / 37)).